The following is a 100-amino-acid chain: Urease subunit gamma (100 aa).

Belongs to the urease gamma subunit family. As to quaternary structure, heterotrimer of UreA (gamma), UreB (beta) and UreC (alpha) subunits. Three heterotrimers associate to form the active enzyme.

It localises to the cytoplasm. The catalysed reaction is urea + 2 H2O + H(+) = hydrogencarbonate + 2 NH4(+). It participates in nitrogen metabolism; urea degradation; CO(2) and NH(3) from urea (urease route): step 1/1. In Bordetella bronchiseptica (strain ATCC BAA-588 / NCTC 13252 / RB50) (Alcaligenes bronchisepticus), this protein is Urease subunit gamma.